The sequence spans 363 residues: Pulmonary surfactant-associated protein B (363 aa).

A signal peptide spans 1–16 (LLWLLLLPTLCGLGAA). Positions 17 to 180 (DWSAPSLACA…PHTQDLSEQQ (164 aa)) are excised as a propeptide. Residues 18-58 (WSAPSLACARGPAFWCQSLEQALQCRALGHCLQEVWGNARA) enclose the Saposin A-type domain. Saposin B-type domains lie at 58-140 (ADDL…KPGL), 184-261 (PLPY…SHED), and 277-352 (QESK…RTTF). Cystine bridges form between cysteine 62–cysteine 136, cysteine 65–cysteine 130, cysteine 93–cysteine 105, cysteine 188–cysteine 257, cysteine 191–cysteine 251, cysteine 215–cysteine 226, cysteine 281–cysteine 348, cysteine 284–cysteine 342, and cysteine 307–cysteine 317. Residues 260 to 363 (EDSAGPALAS…PLQCIHIPHF (104 aa)) constitute a propeptide that is removed on maturation. A glycan (N-linked (GlcNAc...) asparagine) is linked at asparagine 293.

As to quaternary structure, homodimer; disulfide-linked.

The protein localises to the secreted. Its subcellular location is the extracellular space. It is found in the surface film. Pulmonary surfactant-associated proteins promote alveolar stability by lowering the surface tension at the air-liquid interface in the peripheral air spaces. SP-B increases the collapse pressure of palmitic acid to nearly 70 millinewtons per meter. The sequence is that of Pulmonary surfactant-associated protein B (SFTPB) from Canis lupus familiaris (Dog).